The following is a 426-amino-acid chain: Histidine--tRNA ligase (426 aa).

The protein belongs to the class-II aminoacyl-tRNA synthetase family.

Its subcellular location is the cytoplasm. It catalyses the reaction tRNA(His) + L-histidine + ATP = L-histidyl-tRNA(His) + AMP + diphosphate + H(+). In Saccharolobus islandicus (strain L.S.2.15 / Lassen #1) (Sulfolobus islandicus), this protein is Histidine--tRNA ligase.